We begin with the raw amino-acid sequence, 2768 residues long: Thyroglobulin (2768 aa).

The signal sequence occupies residues 1-20 (MMTLVLWVSTLLSSVCLVAA). Y25 is subject to Iodotyrosine; alternate. The residue at position 25 (Y25) is a Sulfotyrosine; alternate. Y25 is modified (thyroxine; alternate). The residue at position 25 (Y25) is a Triiodothyronine; alternate. Thyroglobulin type-1 domains are found at residues 32–93 (LRPC…PTAC), 94–161 (LSFC…PTRC), 162–298 (PRSC…RFRC), and 299–359 (PTKC…PLFC). Intrachain disulfides connect C35–C53, C64–C71, C73–C93, C97–C121, C132–C139, C141–C161, C165–C184, and C195–C236. Residue Y109 is modified to Iodotyrosine. N111 carries an N-linked (GlcNAc...) asparagine glycan. Y150 carries the post-translational modification Iodotyrosine; alternate. Residue Y150 is modified to Diiodotyrosine; alternate. N199 is a glycosylation site (N-linked (GlcNAc...) asparagine). Y235 and Y259 each carry iodotyrosine. 8 cysteine pairs are disulfide-bonded: C302–C320, C331–C337, C339–C365, C408–C608, C631–C636, C638–C658, C662–C687, and C698–C703. N484, N496, and N545 each carry an N-linked (GlcNAc...) asparagine glycan. Thyroglobulin type-1 domains are found at residues 605–658 (AQAC…HPRC), 659–726 (PTKC…PKLC), 727–922 (PSVC…IPAC), 923–1074 (PGPC…MPQC), 1075–1146 (PTSC…SAQC), and 1147–1211 (PGLC…QPAC). Y704 is modified (iodotyrosine; alternate). Y704 carries the post-translational modification Thyroxine; alternate. Residue Y704 is modified to Triiodothyronine; alternate. Y704 carries the post-translational modification Diiodotyrosine; alternate. Disulfide bonds link C705–C726, C730–C763, C774–C899, C901–C922, C926–C1032, C1043–C1050, C1052–C1074, C1078–C1109, C1127–C1146, C1150–C1170, C1182–C1189, C1191–C1211, C1216–C1265, C1232–C1246, C1306–C1356, and C1331–C1347. N748 is a glycosylation site (N-linked (GlcNAc...) asparagine). Y785 bears the Iodotyrosine mark. Residue N817 is glycosylated (N-linked (GlcNAc...) asparagine). An Iodotyrosine; alternate modification is found at Y867. Y867 carries the diiodotyrosine; alternate modification. Diiodotyrosine is present on Y884. N948 carries N-linked (GlcNAc...) asparagine glycosylation. Iodotyrosine; alternate is present on Y993. Y993 is modified (diiodotyrosine; alternate). Residue N1017 is glycosylated (N-linked (GlcNAc...) asparagine). N1141 is a glycosylation site (N-linked (GlcNAc...) asparagine). Y1310 carries the iodotyrosine modification. At Y1310 the chain carries Thyroxine. N-linked (GlcNAc...) asparagine glycosylation is found at N1349 and N1365. 9 disulfide bridges follow: C1441-C1458, C1461-C1472, C1475-C1489, C1492-C1509, C1513-C1522, C1542-C1564, C1602-C1626, C1606-C1612, and C1638-C1661. Type II repeat units follow at residues 1455-1468 (PLGCVKCPEGSFSQ), 1469-1485 (DGKCTPCPAGTYQGQAG), and 1486-1502 (SSACIPCPRGRTTTITG). Residues 1510–1564 (VTDCQRDEAGLQCDQNGQYQANQKDMDSGEVFCVDSEGQRLQWLQTEAGLSESQC) form the Thyroglobulin type-1 11 domain. A Type IIIA repeat occupies 1602-1722 (CLADCADDEA…GTNLTDTHLF (121 aa)). Residue N1715 is glycosylated (N-linked (GlcNAc...) asparagine). Cystine bridges form between C1723–C1748, C1727–C1733, C1732–C1834, and C1759–C1776. A Type IIIB repeat occupies 1723–1891 (CLLACDQDSC…LFSAEQANLW (169 aa)). N-linked (GlcNAc...) asparagine glycans are attached at residues N1773 and N1866. 7 cysteine pairs are disulfide-bonded: C1892–C1918, C1896–C1903, C1927–C1938, C1995–C2023, C1999–C2005, C2004–C2075, and C2034–C2047. The stretch at 1892–1994 (CLSRCAQEPV…EKLISNGFFE (103 aa)) is one Type IIIA repeat. A glycan (N-linked (GlcNAc...) asparagine) is linked at N1937. One copy of the Type IIIB repeat lies at 1995-2127 (CERLCDRDPC…SATRNFSLAQ (133 aa)). N2012 is a glycosylation site (N-linked (GlcNAc...) asparagine). An N-linked (GlcNAc...) asparagine glycan is attached at N2122. Residues 2128 to 2185 (DFCLQECSRHQDCLVTTLQIQQGVVRCVFYPDIQSCEHSLRSKTCWLLLHEEAAYIYR) form a Type IIIA repeat. Intrachain disulfides connect C2130–C2154, C2134–C2140, and C2163–C2172. Y2184 is subject to Iodotyrosine. A cholinesterase-like (ChEL) region spans residues 2188 to 2768 (GAPLHQSDGI…LEPVPKSYSK (581 aa)). An N-linked (GlcNAc...) asparagine glycan is attached at N2251. The cysteines at positions 2265 and 2282 are disulfide-linked. N-linked (GlcNAc...) asparagine glycosylation is found at N2296 and N2445. A disulfide bond links C2443 and C2454. Y2541 carries the thyroxine modification. Y2574 carries the post-translational modification Iodotyrosine; alternate. Thyroxine; alternate is present on Y2574. The residue at position 2574 (Y2574) is a Triiodothyronine; alternate. Y2574 is modified (diiodotyrosine; alternate). A glycan (N-linked (GlcNAc...) asparagine) is linked at N2583. Residues Y2588 and Y2618 each carry the iodotyrosine modification. C2592 and C2716 are oxidised to a cystine. Y2698 bears the Diiodotyrosine mark. A disordered region spans residues 2731-2768 (GAKDAQLTKSGEEDLEVGPGSEEDFSGSLEPVPKSYSK). Acidic residues predominate over residues 2743 to 2755 (EDLEVGPGSEEDF). Y2766 is subject to Iodotyrosine; alternate. At Y2766 the chain carries Thyroxine; alternate. Residue Y2766 is modified to Triiodothyronine; alternate. At Y2766 the chain carries Diiodotyrosine; alternate.

It belongs to the type-B carboxylesterase/lipase family. As to quaternary structure, monomer. Homodimer (via ChEL region); occurs in the endoplasmic reticulum and is required for export to the Golgi apparatus. Homooligomer; disulfide-linked; stored in this form in the thyroid follicle lumen. Post-translationally, iodinated on tyrosine residues by TPO. There are 4 pairs of iodinated tyrosines used for coupling: acceptor Tyr-25 is coupled to donor Tyr-150 or Tyr-235, acceptor Tyr-2574 is coupled to donor Tyr-2541, acceptor Tyr-2766 in monomer 1 is coupled to donor Tyr-2766 in monomer 2 and acceptor Tyr-1310 in monomer 1 is coupled to donor Tyr-109 in monomer 2. Sulfated tyrosines are desulfated during iodination. In terms of processing, undergoes sequential proteolysis by cathepsins to release thyroxine (T4) and triiodothyronine (T3) hormones. In the thyroid follicle lumen, cross-linked TG (storage form) is solubilized by limited proteolysis mediated by cathepsins CTSB and/or CTSL. Partially cleaved TG is further processed by CTSK/cathepsin K and/or CTSL resulting in the release of thyroxine (T4). Following endocytosis, further processing occurs leading to the release of triiodothyronine (T3) and more T4 hormones. In terms of tissue distribution, specifically expressed in the thyroid gland.

Its subcellular location is the secreted. Its function is as follows. Acts as a substrate for the production of iodinated thyroid hormones thyroxine (T4) and triiodothyronine (T3). The synthesis of T3 and T4 involves iodination of selected tyrosine residues of TG/thyroglobulin followed by their oxidative coupling. Following TG re-internalization and lysosomal-mediated proteolysis, T3 and T4 are released from the polypeptide backbone leading to their secretion into the bloodstream. One dimer produces 7 thyroid hormone molecules. In Rattus norvegicus (Rat), this protein is Thyroglobulin (Tg).